We begin with the raw amino-acid sequence, 73 residues long: Omega-hexatoxin-Ar1b (73 aa).

The N-terminal stretch at 1-22 is a signal peptide; sequence MNTATGFIVLLVLATVLGCIEA. The propeptide occupies 23–37; sequence GESHVREDAMGRARR. 3 disulfide bridges follow: C40–C54, C47–C58, and C53–C72.

Belongs to the neurotoxin 08 (Shiva) family. 01 (omega toxin) subfamily. As to expression, expressed by the venom gland.

The protein localises to the secreted. Insecticidal toxin that reversibly and voltage-independently blocks both mid-low- (M-LVA) and high-voltage-activated (HVA) calcium channels (Cav) in cockroach DUM neurons. Also causes a modest block of insect sodium channel currents (Nav). Induces potent excitatory symptoms, followed by flaccid paralysis leading to death in house crickets. This is Omega-hexatoxin-Ar1b from Atrax robustus (Sydney funnel-web spider).